A 331-amino-acid chain; its full sequence is Cytosolic 5'-nucleotidase 3A (331 aa).

The active-site Nucleophile is the Asp83. The Mg(2+) site is built by Asp83 and Asp85. Asp85 serves as the catalytic Proton donor. Residue Glu130 coordinates CMP. N(7)-methyl-GMP contacts are provided by Glu130 and Ser151. Substrate is bound by residues 198–200 (SAG) and Lys247. Asp272 is a binding site for Mg(2+). Ser273 is modified (phosphoserine).

It belongs to the pyrimidine 5'-nucleotidase family. As to quaternary structure, monomer. In terms of tissue distribution, isoform 2 is highly expressed in the brain, heart, spleen, kidney and blood. Isoform 2 is expressed (at protein level) in the spleen, skeletal muscle and gastrointestinal epithelia.

The protein localises to the cytoplasm. The catalysed reaction is N(7)-methyl-GMP + H2O = N(7)-methylguanosine + phosphate. It catalyses the reaction a ribonucleoside 5'-phosphate + H2O = a ribonucleoside + phosphate. In terms of biological role, nucleotidase which shows specific activity towards cytidine monophosphate (CMP) and 7-methylguanosine monophosphate (m(7)GMP). CMP seems to be the preferred substrate. This is Cytosolic 5'-nucleotidase 3A (Nt5c3a) from Mus musculus (Mouse).